A 112-amino-acid chain; its full sequence is Large ribosomal subunit protein eL30 (112 aa).

The protein belongs to the eukaryotic ribosomal protein eL30 family.

The chain is Large ribosomal subunit protein eL30 (RPL30) from Lupinus luteus (European yellow lupine).